The following is a 205-amino-acid chain: GTP cyclohydrolase-2 (205 aa).

49–53 serves as a coordination point for GTP; sequence RLHSE. The Zn(2+) site is built by cysteine 54, cysteine 65, and cysteine 67. GTP is bound by residues glutamine 70, 92 to 94, and threonine 114; that span reads EGR. Aspartate 126 acts as the Proton acceptor in catalysis. Arginine 128 acts as the Nucleophile in catalysis. GTP is bound by residues threonine 149 and lysine 154.

The protein belongs to the GTP cyclohydrolase II family. Requires Zn(2+) as cofactor.

It catalyses the reaction GTP + 4 H2O = 2,5-diamino-6-hydroxy-4-(5-phosphoribosylamino)-pyrimidine + formate + 2 phosphate + 3 H(+). It functions in the pathway cofactor biosynthesis; riboflavin biosynthesis; 5-amino-6-(D-ribitylamino)uracil from GTP: step 1/4. Catalyzes the conversion of GTP to 2,5-diamino-6-ribosylamino-4(3H)-pyrimidinone 5'-phosphate (DARP), formate and pyrophosphate. This chain is GTP cyclohydrolase-2, found in Pseudomonas aeruginosa (strain LESB58).